A 158-amino-acid chain; its full sequence is Phosphopantetheine adenylyltransferase (158 aa).

Position 10 (Thr10) interacts with substrate. Residues Thr10–Phe11 and His18 contribute to the ATP site. Positions 42, 74, and 88 each coordinate substrate. Residues Gly89 to Arg91, Glu99, and Trp124 to Thr130 each bind ATP.

Belongs to the bacterial CoaD family. In terms of assembly, homohexamer. Requires Mg(2+) as cofactor.

It is found in the cytoplasm. The enzyme catalyses (R)-4'-phosphopantetheine + ATP + H(+) = 3'-dephospho-CoA + diphosphate. Its pathway is cofactor biosynthesis; coenzyme A biosynthesis; CoA from (R)-pantothenate: step 4/5. In terms of biological role, reversibly transfers an adenylyl group from ATP to 4'-phosphopantetheine, yielding dephospho-CoA (dPCoA) and pyrophosphate. This chain is Phosphopantetheine adenylyltransferase, found in Actinobacillus pleuropneumoniae serotype 3 (strain JL03).